A 309-amino-acid chain; its full sequence is Ubiquitin-conjugating enzyme E2 32 (309 aa).

One can recognise a UBC core domain in the interval 11–166; sequence PAVKRILQEV…ERQKIIDEIH (156 aa). Cys-93 acts as the Glycyl thioester intermediate in catalysis. Residues 275 to 295 traverse the membrane as a helical segment; it reads FTWAAVGLTIAIMVLLLKKFI.

Belongs to the ubiquitin-conjugating enzyme family.

The protein localises to the membrane. It carries out the reaction S-ubiquitinyl-[E1 ubiquitin-activating enzyme]-L-cysteine + [E2 ubiquitin-conjugating enzyme]-L-cysteine = [E1 ubiquitin-activating enzyme]-L-cysteine + S-ubiquitinyl-[E2 ubiquitin-conjugating enzyme]-L-cysteine.. It participates in protein modification; protein ubiquitination. Functionally, accepts the ubiquitin from the E1 complex and catalyzes its covalent attachment to other proteins. This chain is Ubiquitin-conjugating enzyme E2 32 (UBC32), found in Arabidopsis thaliana (Mouse-ear cress).